The chain runs to 212 residues: MAETSNNKTSEEAKANEKKSQSETLEESKLENMNSEESTETTQTESMETAETETSLQTELESAKKEIESLKDSWARERAEFQNFKRRSAQEFVSIRKEAVKSLVSGFLNPIDNLERVGATQTNSEELKPFVDGVTMILKEFYSVLEKSNVIRFDPKGEPFDPMSMEALSSEEGDQYSEETVIDVYQPGYYYKENEDKFTLRPARVRIGKPKS.

Residues 1 to 68 (MAETSNNKTS…ELESAKKEIE (68 aa)) are disordered. The segment covering 9–30 (TSEEAKANEKKSQSETLEESKL) has biased composition (basic and acidic residues). Low complexity predominate over residues 40–60 (ETTQTESMETAETETSLQTEL).

The protein belongs to the GrpE family. In terms of assembly, homodimer.

Its subcellular location is the cytoplasm. In terms of biological role, participates actively in the response to hyperosmotic and heat shock by preventing the aggregation of stress-denatured proteins, in association with DnaK and GrpE. It is the nucleotide exchange factor for DnaK and may function as a thermosensor. Unfolded proteins bind initially to DnaJ; upon interaction with the DnaJ-bound protein, DnaK hydrolyzes its bound ATP, resulting in the formation of a stable complex. GrpE releases ADP from DnaK; ATP binding to DnaK triggers the release of the substrate protein, thus completing the reaction cycle. Several rounds of ATP-dependent interactions between DnaJ, DnaK and GrpE are required for fully efficient folding. This chain is Protein GrpE, found in Leptospira interrogans serogroup Icterohaemorrhagiae serovar copenhageni (strain Fiocruz L1-130).